We begin with the raw amino-acid sequence, 306 residues long: Glutaminase (306 aa).

The substrate site is built by S64, N115, E159, N166, Y190, Y242, and V260.

This sequence belongs to the glutaminase family. As to quaternary structure, homotetramer.

It catalyses the reaction L-glutamine + H2O = L-glutamate + NH4(+). The chain is Glutaminase from Aliivibrio salmonicida (strain LFI1238) (Vibrio salmonicida (strain LFI1238)).